We begin with the raw amino-acid sequence, 293 residues long: uncharacterized protein (293 aa).

Disordered regions lie at residues 1-114 (MFLR…IPKL) and 268-293 (EETADWESEGQEREAKEQREGPGRML). A phosphoserine mark is found at Ser-34, Ser-35, and Ser-89. Composition is skewed to basic and acidic residues over residues 73-95 (SSRDLKVDQLGSKRMDSLKRDKT) and 277-293 (GQEREAKEQREGPGRML).

This is an uncharacterized protein from Mus musculus (Mouse).